Consider the following 322-residue polypeptide: MNSLKDGNHTALTGFILLGLTDDPILRVILFMIILSGNLSIIILIRISSQLHHPMYFFLSHLAFADMAYSSSVTPNMLVNFLVERNTVSYLGCAIQLGSAAFFATVECVLLAAMAYDRFVAICSPLLYSTKMSTQVSVQLLLVVYIAGFLIAVSYTTSFYFLLFCGPNQVNHFFCDFAPLLELSCSDISVSTVVLSFSSGSIIVVTVCVIAVCYIYILITILKMRSTEGHHKAFSTCTSHLTVVTLFYGTITFIYVMPNFSYSTDQNKVVSVLYTVVIPMLNPLIYSLRNKEIKGALKRELVRKILSHDACYFSRTSNNDIT.

The Extracellular portion of the chain corresponds to 1-28 (MNSLKDGNHTALTGFILLGLTDDPILRV). Asparagine 8 is a glycosylation site (N-linked (GlcNAc...) asparagine). Residues 29–42 (ILFMIILSGNLSII) form a helical membrane-spanning segment. Residues 43-50 (ILIRISSQ) are Cytoplasmic-facing. A helical transmembrane segment spans residues 51–71 (LHHPMYFFLSHLAFADMAYSS). Residues 72-95 (SVTPNMLVNFLVERNTVSYLGCAI) lie on the Extracellular side of the membrane. A disulfide bond links cysteine 93 and cysteine 185. Residues 96–116 (QLGSAAFFATVECVLLAAMAY) form a helical membrane-spanning segment. Topologically, residues 117 to 135 (DRFVAICSPLLYSTKMSTQ) are cytoplasmic. A helical transmembrane segment spans residues 136-156 (VSVQLLLVVYIAGFLIAVSYT). At 157-192 (TSFYFLLFCGPNQVNHFFCDFAPLLELSCSDISVST) the chain is on the extracellular side. Residues 193–213 (VVLSFSSGSIIVVTVCVIAVC) traverse the membrane as a helical segment. The Cytoplasmic segment spans residues 214–233 (YIYILITILKMRSTEGHHKA). A helical membrane pass occupies residues 234–254 (FSTCTSHLTVVTLFYGTITFI). Topologically, residues 255 to 267 (YVMPNFSYSTDQN) are extracellular. Residue asparagine 259 is glycosylated (N-linked (GlcNAc...) asparagine). A helical membrane pass occupies residues 268–288 (KVVSVLYTVVIPMLNPLIYSL). At 289–322 (RNKEIKGALKRELVRKILSHDACYFSRTSNNDIT) the chain is on the cytoplasmic side.

This sequence belongs to the G-protein coupled receptor 1 family. As to expression, expressed in the tongue.

The protein localises to the cell membrane. Odorant receptor (Potential). May be involved in taste perception. This Homo sapiens (Human) protein is Olfactory receptor 5P2 (OR5P2).